The following is a 355-amino-acid chain: Uroporphyrinogen decarboxylase (355 aa).

Substrate contacts are provided by residues 27–31 (RQAGR), D77, Y154, T209, and H328.

This sequence belongs to the uroporphyrinogen decarboxylase family. Homodimer.

The protein resides in the cytoplasm. The enzyme catalyses uroporphyrinogen III + 4 H(+) = coproporphyrinogen III + 4 CO2. It functions in the pathway porphyrin-containing compound metabolism; protoporphyrin-IX biosynthesis; coproporphyrinogen-III from 5-aminolevulinate: step 4/4. Catalyzes the decarboxylation of four acetate groups of uroporphyrinogen-III to yield coproporphyrinogen-III. The polypeptide is Uroporphyrinogen decarboxylase (Vibrio cholerae serotype O1 (strain ATCC 39541 / Classical Ogawa 395 / O395)).